A 405-amino-acid chain; its full sequence is CMP-sialic acid transporter 4 (405 aa).

Topologically, residues methionine 1–asparagine 43 are cytoplasmic. The helical transmembrane segment at phenylalanine 44–serine 64 threads the bilayer. Residues lysine 65–proline 74 are Lumenal-facing. The chain crosses the membrane as a helical span at residues isoleucine 75–isoleucine 95. Topologically, residues glutamine 96 to alanine 121 are cytoplasmic. A helical membrane pass occupies residues leucine 122–leucine 142. Position 143 (tyrosine 143) is a topological domain, lumenal. The helical transmembrane segment at phenylalanine 144–leucine 164 threads the bilayer. Residues lysine 165–lysine 171 are Cytoplasmic-facing. Residues phenylalanine 172–leucine 192 form a helical membrane-spanning segment. Topologically, residues serine 193–glycine 203 are lumenal. The helical transmembrane segment at leucine 204 to alanine 224 threads the bilayer. The Cytoplasmic segment spans residues serine 225 to asparagine 244. Residues leucine 245–phenylalanine 265 form a helical membrane-spanning segment. At glutamine 266 to threonine 281 the chain is on the lumenal side. The helical transmembrane segment at methionine 282 to alanine 302 threads the bilayer. Topologically, residues aspartate 303–serine 322 are cytoplasmic. A helical transmembrane segment spans residues alanine 323–isoleucine 343. The Lumenal portion of the chain corresponds to serine 344 to isoleucine 405.

It belongs to the nucleotide-sugar transporter family. CMP-Sialate:CMP antiporter (TC 2.A.7.12) subfamily.

Its subcellular location is the golgi apparatus membrane. Functionally, sugar transporter involved in the transport of CMP-sialic acid from the cytoplasm into the Golgi. May transport important nucleotide sugars such as CMP-Kdo (2-keto-3-deoxy-D-manno-octulosonic acid) in physiological conditions. The sequence is that of CMP-sialic acid transporter 4 from Oryza sativa subsp. japonica (Rice).